We begin with the raw amino-acid sequence, 1454 residues long: ABC transporter G family member 39 (1454 aa).

Residues 175–448 (LGFFHLLPSK…FEYFGFQCPE (274 aa)) enclose the ABC transporter 1 domain. 208–215 (GPPSSGKT) is a binding site for ATP. Residues 526–739 (ELFKACFDRE…GQTAIVMNEF (214 aa)) form the ABC transmembrane type-2 1 domain. 7 helical membrane passes run 544-564 (FVYVFKTVQITIMSLITMTVY), 584-604 (MFFSLINVMFNGLAELAFTVM), 623-643 (FALPAWLLKIPLSLIESGIWI), 663-683 (LLAYFCVNQMALSLFRFLGAI), 689-709 (ISNSIGTFTLLIVFTLGGFII), 716-736 (PWMTWAYYMSPMMYGQTAIVM), and 775-795 (FWICIVALLGFSLLFNLFYIL). A compositionally biased stretch (basic and acidic residues) spans 812–824 (EEGKDKQKGENRG). A disordered region spans residues 812–838 (EEGKDKQKGENRGTEGSVVELNSSSNK). The ABC transporter 2 domain occupies 853-1106 (LAFNNVNYYV…LVEYFEAVEG (254 aa)). 898 to 905 (GVSGAGKT) serves as a coordination point for ATP. Residues 1178 to 1392 (TQTKACFWKQ…TLYGLITSQV (215 aa)) enclose the ABC transmembrane type-2 2 domain. The next 7 helical transmembrane spans lie at 1199-1219 (AIRFLMTVVIGVLFGLIFWQI), 1231-1251 (NFFGAMYAAVLFLGALNAATV), 1285-1303 (IMYNTIQTGVYTLILYSMI), 1312-1332 (FLWFYYYMLTSFIYFTLYGMM), 1342-1362 (IAGICMSFFLSLWNLFSGFLI), 1367-1387 (IPIWWRWYYWATPVAWTLYGL), and 1423-1443 (FLPVVAVVHIAWILLFLFVFA).

The protein belongs to the ABC transporter superfamily. ABCG family. PDR (TC 3.A.1.205) subfamily.

The protein localises to the membrane. Its function is as follows. May be a general defense protein. The sequence is that of ABC transporter G family member 39 (ABCG39) from Arabidopsis thaliana (Mouse-ear cress).